The following is a 118-amino-acid chain: MEDFATRTYGTSGLDNRPLFGETSAKDRIINLVVGSLTSLLILVTLISAFVFPQLPPKPLNIFFAVCISLSSITACILIYWYRQGDLEPKFRKLIYYIIFSIIMLCICANLYFHDVGR.

Position 1 is an N-acetylmethionine (M1). A run of 3 helical transmembrane segments spans residues 32–52 (LVVGSLTSLLILVTLISAFVF), 62–82 (IFFAVCISLSSITACILIYWY), and 94–114 (LIYYIIFSIIMLCICANLYFH).

It belongs to the TMEM243 family. As to expression, widely expressed.

The protein resides in the membrane. This Homo sapiens (Human) protein is Transmembrane protein 243 (TMEM243).